The sequence spans 440 residues: MQAYFDQLDRVRYEGPQSTNPLAFRHYNPDELVLGKRMEDHLRFAACYWHTFCWNGADMFGVGAFNRPWQQPGEALELAKRKADVAFEFFHKLNVPFYCFHDVDVSPEGASLKEYKNNFAQMVDVLAAKQEQSGVKLLWGTANCFTNPRYGAGAATNPDPEVFSWAATQVVTAMNATHKLGGENYVLWGGREGYETLLNTDLRQEREQIGRFMQMVVEHKHKMGFQGTLLIEPKPQEPTKHQYDYDVATVYGFLKQFGLEKEIKVNIEANHATLAGHSFHHEIATAIALGIFGSVDANRGDAQLGWDTDQFPISVEENALVMYEILKAGGFTTGGLNFDAKVRRQSTDKYDLFYGHIGAMDTMALSLKIAARMVEDGELDKRVAKRYAGWNGELGQQILKGQLSLGELAQYAEQHNLAPVHQSGHQELLENLVNRYLFDK.

Residues H101 and D104 contribute to the active site. Positions 232, 268, 271, 296, 307, 309, and 339 each coordinate Mg(2+).

Belongs to the xylose isomerase family. As to quaternary structure, homotetramer. Mg(2+) serves as cofactor.

It is found in the cytoplasm. The catalysed reaction is alpha-D-xylose = alpha-D-xylulofuranose. The sequence is that of Xylose isomerase from Salmonella agona (strain SL483).